A 953-amino-acid chain; its full sequence is Scaffold attachment factor B2 (953 aa).

The tract at residues 1 to 29 is disordered; the sequence is MAETLPGSGDSGPGTASLGPGVAETGTRR. A2 bears the N-acetylalanine mark. The region spanning 30–64 is the SAP domain; it reads LSELRVIDLRAELKKRNLDTGGNKSVLMERLKKAV. S54 is modified (phosphoserine). K65 is covalently cross-linked (Glycyl lysine isopeptide (Lys-Gly) (interchain with G-Cter in SUMO1); alternate). A Glycyl lysine isopeptide (Lys-Gly) (interchain with G-Cter in SUMO2); alternate cross-link involves residue K65. Residues 91 to 114 form a disordered region; that stretch reads KGLKMEEEGTEDNGLEDDSRDGQE. A Glycyl lysine isopeptide (Lys-Gly) (interchain with G-Cter in SUMO2) cross-link involves residue K94. A compositionally biased stretch (acidic residues) spans 98–114; it reads EGTEDNGLEDDSRDGQE. 2 positions are modified to phosphoserine: S109 and S158. Residues K188 and K199 each participate in a glycyl lysine isopeptide (Lys-Gly) (interchain with G-Cter in SUMO2) cross-link. The residue at position 201 (T201) is a Phosphothreonine. The residue at position 207 (S207) is a Phosphoserine. Positions 219-404 are disordered; it reads ILGETCKSEP…KDEKGRVGSG (186 aa). Positions 224 to 233 are enriched in basic and acidic residues; the sequence is CKSEPVKEES. K230 is covalently cross-linked (Glycyl lysine isopeptide (Lys-Gly) (interchain with G-Cter in SUMO)). Polar residues predominate over residues 274-285; the sequence is SESTAHAQSSKA. Basic and acidic residues predominate over residues 292–308; that stretch reads VKREPAEQPGDGERTDC. Residue K293 forms a Glycyl lysine isopeptide (Lys-Gly) (interchain with G-Cter in SUMO) linkage. Residues 318-329 are compositionally biased toward low complexity; the sequence is EQSSAASELAEA. Basic and acidic residues predominate over residues 345–358; the sequence is EARDSKEDGRKFDF. Polar residues predominate over residues 370–382; that stretch reads ESSTSEGADQKMS. Glycyl lysine isopeptide (Lys-Gly) (interchain with G-Cter in SUMO2) cross-links involve residues K380, K385, K388, K391, and K395. The segment covering 383–400 has biased composition (basic and acidic residues); that stretch reads SFKEEKDIKPIIKDEKGR. The RRM domain occupies 407–485; sequence RNLWVSGLSS…RMISVEKAKN (79 aa). S507 and S513 each carry phosphoserine. Residues K517, K524, K525, K541, K542, and K551 each participate in a glycyl lysine isopeptide (Lys-Gly) (interchain with G-Cter in SUMO2) cross-link. The span at 525-551 shows a compositional bias: basic and acidic residues; it reads KEEKIEKKEEKKPEDIKKEEKDQDELK. Disordered stretches follow at residues 525 to 665 and 684 to 953; these read KEEK…RLQR and RERL…TRRY. A compositionally biased stretch (polar residues) spans 555–564; sequence TNRSRVTKSG. Basic and acidic residues predominate over residues 567–579; the sequence is GMERTVVMDKSKG. Glycyl lysine isopeptide (Lys-Gly) (interchain with G-Cter in SUMO2) cross-links involve residues K578, K586, and K608. 2 stretches are compositionally biased toward basic and acidic residues: residues 590 to 665 and 684 to 820; these read RSKE…RLQR and RERL…DSRD. The segment at 600–953 is interaction with SAFB1; it reads DRKSESKEKR…PPYPHFTRRY (354 aa). K616 participates in a covalent cross-link: Glycyl lysine isopeptide (Lys-Gly) (interchain with G-Cter in SUMO2); alternate. K616 bears the N6-acetyllysine; alternate mark. The Nuclear localization signal signature appears at 713–730; that stretch reads RRQQEQLRYEQERRPGRR. S787 and S832 each carry phosphoserine. Positions 843 to 859 are enriched in basic and acidic residues; it reads GGRDWGEHNQRLEEHQA. The span at 881 to 890 shows a compositional bias: gly residues; sequence GERGLSGPSG. S886 is subject to Phosphoserine. 2 positions are modified to omega-N-methylarginine: R897 and R903. Over residues 899-927 the composition is skewed to gly residues; that stretch reads GVAGRGGFAQGGHSQGHVVPGGGLEGGGV.

Interacts with SAFB/SAFB1 and SCAM1. Interacts with isoform 2 SRPK1 and inhibits its activity. Expressed at high levels in the CNS and at low levels in the liver. Expressed in a wide number of breast cancer cell lines.

It is found in the cytoplasm. The protein resides in the nucleus. Functionally, binds to scaffold/matrix attachment region (S/MAR) DNA. Can function as an estrogen receptor corepressor and can also inhibit cell proliferation. The sequence is that of Scaffold attachment factor B2 (SAFB2) from Homo sapiens (Human).